The sequence spans 252 residues: tRNA pseudouridine synthase A (252 aa).

Asp51 (nucleophile) is an active-site residue. Position 105 (Tyr105) interacts with substrate.

It belongs to the tRNA pseudouridine synthase TruA family.

It catalyses the reaction uridine(38/39/40) in tRNA = pseudouridine(38/39/40) in tRNA. Functionally, formation of pseudouridine at positions 38, 39 and 40 in the anticodon stem and loop of transfer RNAs. The polypeptide is tRNA pseudouridine synthase A (Thermoplasma acidophilum (strain ATCC 25905 / DSM 1728 / JCM 9062 / NBRC 15155 / AMRC-C165)).